Here is a 520-residue protein sequence, read N- to C-terminus: GMP synthase [glutamine-hydrolyzing] (520 aa).

Residues 9–202 (RVLIVDFGSQ…LFNIAGLKGD (194 aa)) enclose the Glutamine amidotransferase type-1 domain. Catalysis depends on Cys86, which acts as the Nucleophile. Catalysis depends on residues His176 and Glu178. The GMPS ATP-PPase domain occupies 203 to 395 (WTMAAFRQEM…LGLAPAFVGR (193 aa)). 230–236 (SGGVDSS) is an ATP binding site.

Homodimer.

The enzyme catalyses XMP + L-glutamine + ATP + H2O = GMP + L-glutamate + AMP + diphosphate + 2 H(+). The protein operates within purine metabolism; GMP biosynthesis; GMP from XMP (L-Gln route): step 1/1. Catalyzes the synthesis of GMP from XMP. The protein is GMP synthase [glutamine-hydrolyzing] of Caulobacter vibrioides (strain ATCC 19089 / CIP 103742 / CB 15) (Caulobacter crescentus).